The following is a 74-amino-acid chain: MSSGGLLLLLGLLTLWEVLTPVSSKDRPKKPGLCPPRPQKPCVKECKNDWSCPGQQKCCNYGCIDECRDPIFVN.

The N-terminal stretch at 1–24 (MSSGGLLLLLGLLTLWEVLTPVSS) is a signal peptide. One can recognise a WAP domain in the interval 27-71 (RPKKPGLCPPRPQKPCVKECKNDWSCPGQQKCCNYGCIDECRDPI). Intrachain disulfides connect C34-C59, C42-C63, C46-C58, and C52-C67.

This sequence belongs to the venom waprin family. As to expression, expressed by the venom gland.

The protein localises to the secreted. In terms of biological role, damages membranes of susceptible bacteria. Has antibacterial activity against the Gram-positive bacteria B.megaterium and S.warneri. After 45 minutes of treatment with this protein, B.megaterium have no visible pili and are smooth. Has no antibacterial activity against the Gram-positive bacteria B.thuringiensis, S.aureus, S.clavuligerus and B. anthracis, or the Gram-negative bacteria E.coli and A.tumefaciens. Has no hemolytic activity. Does not inhibit the proteinases elastase and cathepsin G. Is not toxic to mice. This is Omwaprin-b from Oxyuranus microlepidotus (Inland taipan).